The following is a 484-amino-acid chain: Ribosome biogenesis protein YTM1 (484 aa).

Residues 11-94 (VKVLFTTTEQ…EKTVTLQYVR (84 aa)) are ubiquitin-like (UBL) domain. WD repeat units lie at residues 121-160 (SSAG…LATS), 166-204 (GPLC…DHFS), 215-254 (GHRS…APEA), 289-329 (VHSR…VVST), 331-372 (TTSN…AATS), 378-418 (GHIN…PAAG), and 448-484 (GEGV…IISS).

Belongs to the WD repeat WDR12/YTM1 family. As to quaternary structure, component of the NOP7 complex, composed of ERB1, NOP7 and YTM1. The complex is held together by ERB1, which interacts with NOP7 via its N-terminal domain and with YTM1 via a high-affinity interaction between the seven-bladed beta-propeller domains of the 2 proteins. The NOP7 complex associates with the 66S pre-ribosome. Interacts (via UBL domain) with MDN1 (via VWFA/MIDAS domain).

The protein localises to the nucleus. It localises to the nucleolus. Its subcellular location is the nucleoplasm. Its function is as follows. Component of the NOP7 complex, which is required for maturation of the 25S and 5.8S ribosomal RNAs and formation of the 60S ribosome. The chain is Ribosome biogenesis protein YTM1 from Pyricularia oryzae (strain 70-15 / ATCC MYA-4617 / FGSC 8958) (Rice blast fungus).